The chain runs to 658 residues: Pentatricopeptide repeat-containing protein At1g69290 (658 aa).

Disordered regions lie at residues 1–23 (MFRK…ESPS) and 39–61 (TLSP…KSSF). Residues 50-61 (PKTLTPDQKSSF) are compositionally biased toward polar residues. PPR repeat units follow at residues 214–249 (DLVA…GVKP), 250–284 (DELS…GFAS), 285–320 (RRIL…GEES), 323–353 (SVET…AQKL), 361–395 (DSSV…GGGS), 397–431 (GIGV…GLQL), 432–466 (DVEI…RVVD), 467–497 (LKGS…VVED), 503–537 (NSHD…RYEP), 538–568 (NNQT…IKGK), and 581–615 (DHAL…KIFV).

The protein belongs to the PPR family. P subfamily.

The polypeptide is Pentatricopeptide repeat-containing protein At1g69290 (Arabidopsis thaliana (Mouse-ear cress)).